The chain runs to 941 residues: MSGMVDLKEFLAELGKTQKELKNVIEQAKDIGLELRTNSKMTPEEAEKLYKYIVDGIKEQIQSNRPIKKDKEGAATPKASNKKTSKTPKKEEAKSQLKPKNTKKKKKEAPTPILKKKGIEIVDTFENKTPPVENAPKVVTPSQSQIEKAKQKLQEIQKSREALNKLTQSNTNNANNANSAKKEISEVAKQEREQEHLDNKRRENIKRYTGFRVIKRNDDENETQNSVTENKKPTQSAVAIFEDIKKEWQEKDKETKKAKKSNKPKAIPAAKNNKSHKIDFSDARDFKGNNDIYDDETDEILLFDLHEQDNLNEEEEKEIRQNINDRARIQRKNPWMNEGGIKRQSKKKRVFRNDNSQKVVQSVISIPEEVCVYEFAQKANLNLADVIKTLFNLGLMVTKNDFLDKDSIEILAEEFHLEISVQNTLEEFEVEEVLEGVKKERPPVVTIMGHVDHGKTSLLDKIRDKRVAHTEAGGITQHIGAYMVEKNGKWVSFIDTPGHEAFSQMRNRGAQVTDIAVIVIAADDGVKQQTVEALEHAKVANVPVIFAMNKMDKPNVNLDKLKAECAELGYNPVDWGGEYEFIPISAKTGDGIDNLLETILIQADIMELKAIEEGRARAVVLEGSVEKGRGAVATVIVQSGTLSVGDSFFAETAFGKVRTMTDDQGKSIQNLKPSMVALITGLSEVPPAGSVLIGVENDSIARLQAQKRATYLRQKALSKSTKVSFDELSEMVANKELKNIPVVIKADTQGSLEAIKNSLLELNNEEVAIQVIHSGVGGITENDLSLVASSEHAVILGFNIRPTGNVKNKAKEYNVSIKTYTVIYALIEEMRSLLLGLMSPIIEEEHTGQAEVRETFNIPKVGTIAGCVVSDGVITRGIKVRLIRDGVVIHTGEILSLKRFKDDAKEVSKGYECGIMLENYNEIKVGDVFETYKEIHKKRTL.

Disordered regions lie at residues 61 to 204 (IQSN…RREN) and 249 to 274 (QEKD…KNNK). Residues 147–163 (EKAKQKLQEIQKSREAL) show a composition bias toward basic and acidic residues. Residues 164–179 (NKLTQSNTNNANNANS) show a composition bias toward low complexity. Basic and acidic residues predominate over residues 180-204 (AKKEISEVAKQEREQEHLDNKRREN). The tr-type G domain maps to 440–609 (ERPPVVTIMG…LIQADIMELK (170 aa)). The segment at 449–456 (GHVDHGKT) is G1. 449–456 (GHVDHGKT) is a binding site for GTP. Residues 474-478 (GITQH) are G2. Residues 495–498 (DTPG) are G3. Residues 495–499 (DTPGH) and 549–552 (NKMD) contribute to the GTP site. The segment at 549 to 552 (NKMD) is G4. The G5 stretch occupies residues 585-587 (SAK).

Belongs to the TRAFAC class translation factor GTPase superfamily. Classic translation factor GTPase family. IF-2 subfamily.

The protein resides in the cytoplasm. One of the essential components for the initiation of protein synthesis. Protects formylmethionyl-tRNA from spontaneous hydrolysis and promotes its binding to the 30S ribosomal subunits. Also involved in the hydrolysis of GTP during the formation of the 70S ribosomal complex. The chain is Translation initiation factor IF-2 from Helicobacter acinonychis (strain Sheeba).